Consider the following 108-residue polypeptide: Large ribosomal subunit protein uL24 (108 aa).

Belongs to the universal ribosomal protein uL24 family. In terms of assembly, part of the 50S ribosomal subunit.

In terms of biological role, one of two assembly initiator proteins, it binds directly to the 5'-end of the 23S rRNA, where it nucleates assembly of the 50S subunit. One of the proteins that surrounds the polypeptide exit tunnel on the outside of the subunit. The chain is Large ribosomal subunit protein uL24 from Mycoplasma genitalium (strain ATCC 33530 / DSM 19775 / NCTC 10195 / G37) (Mycoplasmoides genitalium).